The chain runs to 622 residues: Neuronal acetylcholine receptor subunit alpha-4 (622 aa).

The N-terminal stretch at 1–23 (MGFLVSKGNLLLLLCASIFPAFG) is a signal peptide. Residues 24 to 237 (HVETRAHAEE…ITYSFIIRRL (214 aa)) lie on the Extracellular side of the membrane. The N-linked (GlcNAc...) asparagine glycan is linked to Asn-52. Positions 71 and 73 each coordinate Ca(2+). Asn-102 is a glycosylation site (N-linked (GlcNAc...) asparagine). 2 cysteine pairs are disulfide-bonded: Cys-156–Cys-170 and Cys-220–Cys-221. Residues 238–262 (PLFYTINLIIPCLLISCLTVLVFYL) form a helical membrane-spanning segment. Residue Cys-266 is the site of S-palmitoyl cysteine attachment. Helical transmembrane passes span 270-288 (ITLCISVLLSLTVFLLLIT) and 304-325 (YLLFTMIFVTLSIIITVFVLNV). The Cytoplasmic portion of the chain corresponds to 326 to 595 (HHRSPRTHTM…WKYVAMVIDR (270 aa)). Disordered regions lie at residues 380–477 (WSET…TEEG) and 497–516 (QTNGHSSASPASQRCHLNEE). Over residues 390-407 (TTSSSPSPQSNEPSPTSS) the composition is skewed to low complexity. Composition is skewed to polar residues over residues 450 to 472 (SDTQTTSISKGRSLSVQQMYSPN) and 497 to 508 (QTNGHSSASPAS). The helical transmembrane segment at 596 to 614 (IFLWMFIIVCLLGTVGLFL) threads the bilayer.

Belongs to the ligand-gated ion channel (TC 1.A.9) family. Acetylcholine receptor (TC 1.A.9.1) subfamily. Alpha-4/CHRNA4 sub-subfamily. Neuronal AChR is composed of two different types of subunits: alpha and beta. CHRNA4 forms heteropentameric neuronal acetylcholine receptors with CHRNB2 and CHRNB4, as well as CHRNA5 and CHRNB3 as accesory subunits. Found in two major stoichiometric forms, LS (low agonist sensitivity): (CHRNA4)3:(CHRNB2)2 and HS (high agonist sensitivity): (CHRNA4)2:(CHRNB2)3, the two stoichiometric forms differ in their unitary conductance, calcium permeability, ACh sensitivity and potentiation by divalent cation. Cells produce predominantly an (CHRNA4)3:(CHRNB2)2 nAChR. The (CHRNA4)2:(CHRNB2)3 expression is selectively up-regulated by nicotine and has lower single channel conductance and calcium permeability. In the striatum, also forms CHRNA4:CHRNA6:CHRNB2 complexes. Also found in the stoichiometric form: (CHRNA4:CHRNB2)2:CHRNB3.

The protein localises to the synaptic cell membrane. The protein resides in the cell membrane. The catalysed reaction is Ca(2+)(in) = Ca(2+)(out). It carries out the reaction K(+)(in) = K(+)(out). The enzyme catalyses Na(+)(in) = Na(+)(out). Its activity is regulated as follows. Activated by a myriad of ligands such as acetylcholine, cytisine, nicotine, choline and epibatidine. Channel potentiation by calcium is stoichiometry-selective, CHRNA4:CHRNB2 nACh receptor is achieved by calcium association with topographically distinct sites framed by anionic residues within the CHRNA4 subunit and between the CHRNA4 and CHRNB2 subunits. nAChR activity is inhibited by the antagonist alpha-conotoxins BuIA, PnIA, GID and MII, small disulfide-constrained peptides from cone snails. Its function is as follows. Component of neuronal acetylcholine receptors (nAChRs) that function as pentameric, ligand-gated cation channels with high calcium permeability among other activities. nAChRs are excitatory neurotrasnmitter receptors formed by a collection of nAChR subunits known to mediate synaptic transmission in the nervous system and the neuromuscular junction. Each nAchR subunit confers differential attributes to channel properties, including activation, deactivation and desensitization kinetics, pH sensitivity, cation permeability, and binding to allosteric modulators. CHRNA4 forms heteropentameric neuronal acetylcholine receptors with CHRNB2 and CHRNB4, as well as CHRNA5 and CHRNB3 as accesory subunits. Is the most abundant nAChR subtype expressed in the central nervous system. Found in two major stoichiometric forms,(CHRNA4)3:(CHRNB2)2 and (CHRNA4)2:(CHRNB2)3, the two stoichiometric forms differ in their unitary conductance, calcium permeability, ACh sensitivity and potentiation by divalent cation. Involved in the modulation of calcium-dependent signaling pathways, influences the release of neurotransmitters, including dopamine, glutamate and GABA. The protein is Neuronal acetylcholine receptor subunit alpha-4 (CHRNA4) of Gallus gallus (Chicken).